A 345-amino-acid polypeptide reads, in one-letter code: Probable deoxyhypusine synthase 2 (345 aa).

Lys292 (nucleophile) is an active-site residue.

This sequence belongs to the deoxyhypusine synthase family. It depends on NAD(+) as a cofactor.

The enzyme catalyses [eIF5A protein]-L-lysine + spermidine = [eIF5A protein]-deoxyhypusine + propane-1,3-diamine. It functions in the pathway protein modification; eIF5A hypusination. Its function is as follows. Catalyzes the NAD-dependent oxidative cleavage of spermidine and the subsequent transfer of the butylamine moiety of spermidine to the epsilon-amino group of a specific lysine residue of the eIF-5A precursor protein to form the intermediate deoxyhypusine residue. This chain is Probable deoxyhypusine synthase 2 (dys2), found in Methanosarcina acetivorans (strain ATCC 35395 / DSM 2834 / JCM 12185 / C2A).